Consider the following 212-residue polypeptide: Ras-related protein RABC1 (212 aa).

An N-acetylglycine modification is found at Gly-2. Residue 20 to 27 (GDSGVGKS) coordinates GTP. An Effector region motif is present at residues 41-49 (LSPTIGVDF). GTP-binding positions include 67 to 71 (DTAGQ), 127 to 130 (NKVD), and 157 to 158 (SA). Residues 182 to 212 (TAEGSSGGKKNIFKQNPAQTTSTSSSYCCSS) form a disordered region. Positions 201–212 (TTSTSSSYCCSS) are enriched in low complexity. S-geranylgeranyl cysteine attachment occurs at residues Cys-209 and Cys-210.

It belongs to the small GTPase superfamily. Rab family.

It is found in the cell membrane. In terms of biological role, intracellular vesicle trafficking and protein transport. The protein is Ras-related protein RABC1 (RABC1) of Arabidopsis thaliana (Mouse-ear cress).